A 162-amino-acid chain; its full sequence is NADH-quinone oxidoreductase subunit I (162 aa).

4Fe-4S ferredoxin-type domains lie at 52-82 and 93-122; these read LRRYPNGEERCIACKLCEAVCPAQAITIEAG and TRYDIDMVKCIYCGMCQEACPVDAIVEGPN. Residues cysteine 62, cysteine 65, cysteine 68, cysteine 72, cysteine 102, cysteine 105, cysteine 108, and cysteine 112 each contribute to the [4Fe-4S] cluster site.

Belongs to the complex I 23 kDa subunit family. In terms of assembly, NDH-1 is composed of 14 different subunits. Subunits NuoA, H, J, K, L, M, N constitute the membrane sector of the complex. Requires [4Fe-4S] cluster as cofactor.

It is found in the cell inner membrane. The catalysed reaction is a quinone + NADH + 5 H(+)(in) = a quinol + NAD(+) + 4 H(+)(out). NDH-1 shuttles electrons from NADH, via FMN and iron-sulfur (Fe-S) centers, to quinones in the respiratory chain. The immediate electron acceptor for the enzyme in this species is believed to be ubiquinone. Couples the redox reaction to proton translocation (for every two electrons transferred, four hydrogen ions are translocated across the cytoplasmic membrane), and thus conserves the redox energy in a proton gradient. In Methylobacterium sp. (strain 4-46), this protein is NADH-quinone oxidoreductase subunit I.